The chain runs to 483 residues: Protein nucleotidyltransferase YdiU (483 aa).

ATP-binding residues include Gly87, Gly89, Arg90, Lys110, Asp122, Gly123, Arg173, and Arg180. Asp249 (proton acceptor) is an active-site residue. Residues Asn250 and Asp259 each contribute to the Mg(2+) site. Asp259 lines the ATP pocket.

It belongs to the SELO family. It depends on Mg(2+) as a cofactor. Mn(2+) is required as a cofactor.

It carries out the reaction L-seryl-[protein] + ATP = 3-O-(5'-adenylyl)-L-seryl-[protein] + diphosphate. It catalyses the reaction L-threonyl-[protein] + ATP = 3-O-(5'-adenylyl)-L-threonyl-[protein] + diphosphate. The catalysed reaction is L-tyrosyl-[protein] + ATP = O-(5'-adenylyl)-L-tyrosyl-[protein] + diphosphate. The enzyme catalyses L-histidyl-[protein] + UTP = N(tele)-(5'-uridylyl)-L-histidyl-[protein] + diphosphate. It carries out the reaction L-seryl-[protein] + UTP = O-(5'-uridylyl)-L-seryl-[protein] + diphosphate. It catalyses the reaction L-tyrosyl-[protein] + UTP = O-(5'-uridylyl)-L-tyrosyl-[protein] + diphosphate. In terms of biological role, nucleotidyltransferase involved in the post-translational modification of proteins. It can catalyze the addition of adenosine monophosphate (AMP) or uridine monophosphate (UMP) to a protein, resulting in modifications known as AMPylation and UMPylation. In Pectobacterium carotovorum subsp. carotovorum (strain PC1), this protein is Protein nucleotidyltransferase YdiU.